A 201-amino-acid chain; its full sequence is Probable nicotinate-nucleotide adenylyltransferase (201 aa).

This sequence belongs to the NadD family.

The enzyme catalyses nicotinate beta-D-ribonucleotide + ATP + H(+) = deamido-NAD(+) + diphosphate. Its pathway is cofactor biosynthesis; NAD(+) biosynthesis; deamido-NAD(+) from nicotinate D-ribonucleotide: step 1/1. Its function is as follows. Catalyzes the reversible adenylation of nicotinate mononucleotide (NaMN) to nicotinic acid adenine dinucleotide (NaAD). This chain is Probable nicotinate-nucleotide adenylyltransferase, found in Neisseria meningitidis serogroup C / serotype 2a (strain ATCC 700532 / DSM 15464 / FAM18).